We begin with the raw amino-acid sequence, 751 residues long: Photosystem I P700 chlorophyll a apoprotein A1 (751 aa).

The next 8 membrane-spanning stretches (helical) occupy residues 72–95, 158–181, 197–221, 293–311, 348–371, 387–413, 435–457, and 532–550; these read IFSA…FHGA, LYCT…FHYH, MNHH…HVSM, TAHH…GHMY, WHAQ…QHMY, LSLF…IFMV, AIIS…LYIH, and FMVH…LILL. Residues Cys574 and Cys583 each coordinate [4Fe-4S] cluster. The next 2 helical transmembrane spans lie at 590–611 and 665–687; these read HVFL…HFSW and LSAY…MFLF. His676 contacts chlorophyll a'. Met684 and Tyr692 together coordinate chlorophyll a. Residue Trp693 coordinates phylloquinone. A helical transmembrane segment spans residues 725 to 745; sequence AVGVAHYLLGGIVTTWAFFLA.

It belongs to the PsaA/PsaB family. As to quaternary structure, the PsaA/B heterodimer binds the P700 chlorophyll special pair and subsequent electron acceptors. PSI consists of a core antenna complex that captures photons, and an electron transfer chain that converts photonic excitation into a charge separation. The cyanobacterial PSI reaction center is composed of one copy each of PsaA,B,C,D,E,F,I,J,K,L,M and X, and forms trimeric complexes. PSI electron transfer chain: 5 chlorophyll a, 1 chlorophyll a', 2 phylloquinones and 3 4Fe-4S clusters. PSI core antenna: 90 chlorophyll a, 22 carotenoids, 3 phospholipids and 1 galactolipid. P700 is a chlorophyll a/chlorophyll a' dimer, A0 is one or more chlorophyll a, A1 is one or both phylloquinones and FX is a shared 4Fe-4S iron-sulfur center. serves as cofactor.

The protein resides in the cellular thylakoid membrane. It catalyses the reaction reduced [plastocyanin] + hnu + oxidized [2Fe-2S]-[ferredoxin] = oxidized [plastocyanin] + reduced [2Fe-2S]-[ferredoxin]. Its function is as follows. PsaA and PsaB bind P700, the primary electron donor of photosystem I (PSI), as well as the electron acceptors A0, A1 and FX. PSI is a plastocyanin/cytochrome c6-ferredoxin oxidoreductase, converting photonic excitation into a charge separation, which transfers an electron from the donor P700 chlorophyll pair to the spectroscopically characterized acceptors A0, A1, FX, FA and FB in turn. Oxidized P700 is reduced on the lumenal side of the thylakoid membrane by plastocyanin or cytochrome c6. The sequence is that of Photosystem I P700 chlorophyll a apoprotein A1 from Synechocystis sp. (strain ATCC 27184 / PCC 6803 / Kazusa).